The sequence spans 96 residues: Nucleoid-associated protein DR_0199 (96 aa).

Belongs to the YbaB/EbfC family. As to quaternary structure, homodimer.

The protein resides in the cytoplasm. Its subcellular location is the nucleoid. In terms of biological role, binds to DNA and alters its conformation. May be involved in regulation of gene expression, nucleoid organization and DNA protection. The sequence is that of Nucleoid-associated protein DR_0199 from Deinococcus radiodurans (strain ATCC 13939 / DSM 20539 / JCM 16871 / CCUG 27074 / LMG 4051 / NBRC 15346 / NCIMB 9279 / VKM B-1422 / R1).